The primary structure comprises 396 residues: Serine/threonine-protein kinase VRK1 (396 aa).

The Protein kinase domain occupies 37 to 317; sequence WKLGSPIGQG…LLDYVEKPLY (281 aa). Residues 43 to 51 and Lys-71 each bind ATP; that span reads IGQGGFGCI. Lys-71 is covalently cross-linked (Glycyl lysine isopeptide (Lys-Gly) (interchain with G-Cter in SUMO2)). The active-site Proton acceptor is Asp-177. Residues 352–396 form a disordered region; the sequence is KPVAKKRKKEAEESVESSVEDMECSDKQTEEATQTRSKTRKRVQK. Positions 364-374 are enriched in acidic residues; the sequence is ESVESSVEDME. Residue Ser-376 is modified to Phosphoserine. The interval 387–393 is required for interaction with the nucleosome; sequence RSKTRKR.

This sequence belongs to the protein kinase superfamily. CK1 Ser/Thr protein kinase family. VRK subfamily. Interacts with HDAC1, KAT2B, SETDB1, KDM3A and KDM4A. Associates with the nucleosome through interactions with nucleosome DNA, histone H2A and histone H2B; the interaction with H2A and H2B is mediated by the nucleosome acidic patch, a cluster of negatively charged residues of H2A and H2B forming a cleft within the nucleosome core. In terms of processing, autophosphorylated at various serine and threonine residues. Autophosphorylation does not impair its ability to phosphorylate p53/TP53. Phosphorylation by PLK3 leads to induction of Golgi fragmentation during mitosis.

Its subcellular location is the nucleus. The protein localises to the cytoplasm. It localises to the cajal body. It catalyses the reaction L-seryl-[protein] + ATP = O-phospho-L-seryl-[protein] + ADP + H(+). The enzyme catalyses L-threonyl-[protein] + ATP = O-phospho-L-threonyl-[protein] + ADP + H(+). Active in presence of Mn(2+), Mg(2+) and Zn(2+), but is not functional with Ca(2+) or Cu(2+). Has a higher affinity for Mn(2+) than for Mg(2+). RAN inhibits its autophosphorylation and its ability to phosphorylate histone H3. Its function is as follows. Serine/threonine kinase involved in the regulation of key cellular processes including the cell cycle, nuclear condensation, transcription regulation, and DNA damage response. Controls chromatin organization and remodeling by mediating phosphorylation of histone H3 on 'Thr-4' and histone H2AX (H2aXT4ph). It also phosphorylates KAT5 in response to DNA damage, promoting KAT5 association with chromatin and histone acetyltransferase activity. Is involved in the regulation of cell cycle progression of neural progenitors, and is required for proper cortical neuronal migration. Is involved in neurite elongation and branching in motor neurons, and has an essential role in Cajal bodies assembly, acting through COIL phosphorylation and the control of coilin degradation. Involved in Golgi disassembly during the cell cycle: following phosphorylation by PLK3 during mitosis, it is required to induce Golgi fragmentation. Phosphorylates BANF1: disrupts its ability to bind DNA, reduces its binding to LEM domain-containing proteins and causes its relocalization from the nucleus to the cytoplasm. Phosphorylates TP53BP1 and p53/TP53 on 'Thr-18', preventing the interaction between p53/TP53 and MDM2. Phosphorylates ATF2 which activates its transcriptional activity. Phosphorylates JUN. This chain is Serine/threonine-protein kinase VRK1 (VRK1), found in Bos taurus (Bovine).